Here is a 506-residue protein sequence, read N- to C-terminus: Maturase K (506 aa).

This sequence belongs to the intron maturase 2 family. MatK subfamily.

It localises to the plastid. It is found in the chloroplast. Functionally, usually encoded in the trnK tRNA gene intron. Probably assists in splicing its own and other chloroplast group II introns. This Lactuca sativa (Garden lettuce) protein is Maturase K.